Here is a 615-residue protein sequence, read N- to C-terminus: MSTSIFETPLPRSDLFLCSNSLLSQNYKLFDNSRSFGLKSLRPRCQKDGLLYPKPLNFGFCRVSRRKRKPNFVLNSVLSVDKELESDETVGLGRSREYDAIVIGSGIGGLVAATQLAVKGAKVLVLEKYLIPGGSSGYYERDGFTFDVGSSVMFGFSDKGNLNLITQALAAVGCKMEVIPDPSTVHFHLPSNLSVLVHREYNEFFSELTSKFPHEKEGIFKFYGECWKIFNALNSLELKSLEEPIYLFGQFFKKPMECLTLAYYLPQNAGDIARKFIKDPEVLSFIDAECFIVSTVNALKTPMINASMVLCDRHYGGINYPVGGVGGIAKSLAKGLVDQGSEIQYKANVKSIIVENGKAVGVRLANGNEIFAKNIISNATRWDTFGKLLKQDELPKEEENFQKLYIKAPSFLSIHLGVKSDVLPPDTDCHHFVLEDDWSNLEVPYGSIFLSIPTVLDSSLAPEGNHILHIFTTSSIEDWQGMSQKDYEKKKELVADEIISRLEKKLFPGLQSSIVLKEVGTPKTHRRYLARDSGTYGPMPQGTPKGLLGMPFNTTAIDGLYCVGDSCFPGQGVIAVAFSGVMCAHRVAADLGLEQKSPILDAALLRLLGWFRTLA.

A chloroplast-targeting transit peptide spans 1–62 (MSTSIFETPL…PKPLNFGFCR (62 aa)).

The protein belongs to the carotenoid/retinoid oxidoreductase family. CrtISO subfamily. Requires NAD(+) as cofactor. NADP(+) serves as cofactor. The cofactor is FAD.

It is found in the plastid. Its subcellular location is the chloroplast membrane. It carries out the reaction 7,7',9,9'-tetra-cis-lycopene = all-trans-lycopene. The protein operates within carotenoid biosynthesis; lycopene biosynthesis. Functionally, carotene cis-trans-isomerase that converts 7,9,9'-tri-cis-neurosporene to 9'-cis-neurosporene and 7,9,9',7'-tetra-cis-lycopene (also known as prolycopene) into all-trans-lycopene. Isomerization requires redox-active components, suggesting that isomerization is achieved by a reversible redox reaction acting at specific double bonds. Isomerizes adjacent cis-double bonds at C7 and C9 pairwise into the trans-configuration, but is incapable of isomerizing single cis-double bonds at C9 and C9'. This is Prolycopene isomerase, chloroplastic (CRTISO) from Daucus carota (Wild carrot).